A 142-amino-acid polypeptide reads, in one-letter code: HTH-type transcriptional regulator MntR (142 aa).

One can recognise an HTH dtxR-type domain in the interval 1–63; that stretch reads MPTPSMEDYI…YEKYRGLILT (63 aa). 6 residues coordinate Mn(2+): D8, E11, H77, E99, E102, and H103.

Belongs to the DtxR/MntR family. Homodimer.

Its subcellular location is the cytoplasm. With respect to regulation, DNA binding is strongly activated by Mn(2+). Functionally, central regulator of manganese homeostasis. The polypeptide is HTH-type transcriptional regulator MntR (Listeria monocytogenes serotype 4b (strain F2365)).